The chain runs to 483 residues: Cytochrome P450 monooxygenase stcF (483 aa).

C424 contributes to the heme binding site.

The protein belongs to the cytochrome P450 family. Heme serves as cofactor.

Its pathway is mycotoxin biosynthesis; sterigmatocystin biosynthesis. In terms of biological role, cytochrome P450 monooxygenase; part of the gene cluster that mediates the biosynthesis of sterigmatocystin (ST), a polyketide-derived furanocoumarin which is part of the most toxic and carcinogenic compounds among the known mycotoxins. The first step in the biosynthesis of sterigmatocystin is the production of hexanoate by the fatty acid synthase (FAS) units stcJ and stcK. The polyketide backbone is assembled by the non-reducing polyketide synthase stcA by condensation of the starter hexanoyl-CoA and 7 malonyl-CoA extender units followed by cyclization and release of norsolorinic acid. Norsolorinic acid is the first stable intermediate in the biosynthesis of sterigmatocystin and is converted into averantin (AVN) by the ketoreductase stcE which reduces the hexanoate ketone to an alcohol. Averantin is then oxidized into 5'-hydroxyaverantin (HAVN) by the cytochrome P450 monooxygenase stcF. 5'-hydroxyaverantin is further converted to 5'-oxyaverantin (OAVN) by the 5'-hydroxyaverantin dehydrogenase stcG. The next step is the conversion of OAVN into averufin (AVF) which is catalyzed by a yet to be identified enzyme. The cytochrome P450 monooxygenase stcB and the flavin-binding monooxygenase stcW are both required for the conversion of averufin to 1-hydroxyversicolorone. The esterase stcI probably catalyzes the formation of versiconal hemiacetal acetate from 1-hydroxyversicolorone. The oxydoreductase stcN then probably catalyzes the biosynthetic step from versiconal to versicolorin B (VERB). The next step is performed by the versicolorin B desaturase stcL to produce versicolorin A (VERA). The ketoreductase stcU and the cytochrome P450 monooxygenase stcS are involved in the conversion of versicolorin A to demethylsterigmatocystin. The Baeyer-Villiger oxidas stcQ and the reductase stcR might be involved in the biosynthetic step from versicolorin A to demethylsterigmatocystin. The final step in the biosynthesis of sterigmatocystin is the methylation of demethylsterigmatocystin catalyzed by the methyltransferase stcP. The sequence is that of Cytochrome P450 monooxygenase stcF from Emericella nidulans (strain FGSC A4 / ATCC 38163 / CBS 112.46 / NRRL 194 / M139) (Aspergillus nidulans).